We begin with the raw amino-acid sequence, 305 residues long: Dioxygenase hkm4 (305 aa).

The Fe cation site is built by H140, D142, and H216.

The protein belongs to the PhyH family. The cofactor is Fe cation.

It participates in secondary metabolite biosynthesis. Its function is as follows. Dioxygenase; part of the gene cluster that mediates the biosynthesis of hancockiamides, an unusual new family of N-cinnamoylated piperazines. The NRPS hkm10 and the NmrA-like reductase hkm9 are proposed to convert two molecules of L-Phe to the intermediary piperazine called xenocockiamide A. Xenocockiamide A is then converted to hancockiamide D via a series of hydroxylations and O-methylations. The tyrosinase hkm6 may catalyze an aromatic hydroxylation, then the 2-oxoglutarate-dependent Fe(II) dioxygenase hkm4 and the FAD-dependent phenol hydroxylase hkm7 may catalyze consecutive hydroxylations to install 2 more hydroxy groups, and the methyltransferase hkm8 probably catalyzes two methylations using 2 molecules of S-adenosyl-L-methionine (SAM). The NRPS hkm11 activates and transfers trans-cinnamate supplied by the PAL hkm12 to hancockiamide D and produces hancockiamide A. NRPS Hkm11 has the flexibility to tolerate the bulky hancockiamide G as a substrate and the absence of the acetyl-transferase hkm3 opens up the opportunity for hkm11 to introduce a second N-cinnamoyl moiety. The cytochrome P450 monooxygenase hkm5 catalyzes the methylenedioxy bridge formation, converting hancockiamide A into hancockiamide G. Hkm5 can also convert hancockiamide B into hancockiamide C, and hancockiamide D into hancockiamide H. The N-acetyltransferase hkm3 finally transfers an acetyl group to 1-N of piperazine, converting hancockiamide A into hancockiamide B and hancockiamide G into hancockiamide C. This chain is Dioxygenase hkm4, found in Aspergillus hancockii.